We begin with the raw amino-acid sequence, 485 residues long: Glutamyl-tRNA(Gln) amidotransferase subunit A (485 aa).

Active-site charge relay system residues include K78 and S153. S177 acts as the Acyl-ester intermediate in catalysis.

This sequence belongs to the amidase family. GatA subfamily. As to quaternary structure, heterotrimer of A, B and C subunits.

The enzyme catalyses L-glutamyl-tRNA(Gln) + L-glutamine + ATP + H2O = L-glutaminyl-tRNA(Gln) + L-glutamate + ADP + phosphate + H(+). In terms of biological role, allows the formation of correctly charged Gln-tRNA(Gln) through the transamidation of misacylated Glu-tRNA(Gln) in organisms which lack glutaminyl-tRNA synthetase. The reaction takes place in the presence of glutamine and ATP through an activated gamma-phospho-Glu-tRNA(Gln). This chain is Glutamyl-tRNA(Gln) amidotransferase subunit A, found in Bacillus cereus (strain ATCC 14579 / DSM 31 / CCUG 7414 / JCM 2152 / NBRC 15305 / NCIMB 9373 / NCTC 2599 / NRRL B-3711).